The chain runs to 189 residues: Protein OXIDATIVE STRESS 3 LIKE 2 (189 aa).

Disordered regions lie at residues 22-49 and 128-147; these read SSSTSSDSIGENSDDDEGGENEIESSYN and AMSQREGDSSSSGDDSLPTL. Residues 33-44 are compositionally biased toward acidic residues; the sequence is NSDDDEGGENEI.

Its subcellular location is the nucleus. The protein is Protein OXIDATIVE STRESS 3 LIKE 2 of Arabidopsis thaliana (Mouse-ear cress).